Here is an 878-residue protein sequence, read N- to C-terminus: Alanine--tRNA ligase (878 aa).

Positions 562, 566, 670, and 674 each coordinate Zn(2+).

It belongs to the class-II aminoacyl-tRNA synthetase family. Zn(2+) is required as a cofactor.

Its subcellular location is the cytoplasm. The catalysed reaction is tRNA(Ala) + L-alanine + ATP = L-alanyl-tRNA(Ala) + AMP + diphosphate. Catalyzes the attachment of alanine to tRNA(Ala) in a two-step reaction: alanine is first activated by ATP to form Ala-AMP and then transferred to the acceptor end of tRNA(Ala). Also edits incorrectly charged Ser-tRNA(Ala) and Gly-tRNA(Ala) via its editing domain. The chain is Alanine--tRNA ligase from Acinetobacter baylyi (strain ATCC 33305 / BD413 / ADP1).